The sequence spans 150 residues: MPIVDSGSVSPLTAADKTKILAAWDLVYKNYEKNSVDILVKFFTGTPAAQAFFPKFKGLTTADDLKKSSDVRWHAERIINAVNDAVKSMDDTEKMSMKLKELSNKHVKNFNVDRKYFKVLAGVIADTVAPGDASFEKLMSIICILLNSAY.

The region spanning 11-150 (PLTAADKTKI…IICILLNSAY (140 aa)) is the Globin domain. Heme b is bound by residues His74 and His106.

The protein belongs to the globin family. As to quaternary structure, monomer.

This is Globin-3 from Mordacia mordax (Southern hemisphere lamprey).